Reading from the N-terminus, the 144-residue chain is AP-4 complex subunit sigma-1 (144 aa).

The protein belongs to the adaptor complexes small subunit family. As to quaternary structure, adaptor protein complex 4 (AP-4) is a heterotetramer composed of two large adaptins (epsilon-type subunit AP4E1 and beta-type subunit AP4B1), a medium adaptin (mu-type subunit AP4M1) and a small adaptin (sigma-type AP4S1).

The protein localises to the golgi apparatus. It is found in the trans-Golgi network membrane. Its function is as follows. Component of the adaptor protein complex 4 (AP-4). Adaptor protein complexes are vesicle coat components involved both in vesicle formation and cargo selection. They control the vesicular transport of proteins in different trafficking pathways. AP-4 forms a non clathrin-associated coat on vesicles departing the trans-Golgi network (TGN) and may be involved in the targeting of proteins from the trans-Golgi network (TGN) to the endosomal-lysosomal system. It is also involved in protein sorting to the basolateral membrane in epithelial cells and the proper asymmetric localization of somatodendritic proteins in neurons. AP-4 is involved in the recognition and binding of tyrosine-based sorting signals found in the cytoplasmic part of cargos, but may also recognize other types of sorting signal. The polypeptide is AP-4 complex subunit sigma-1 (Mus musculus (Mouse)).